The following is a 38-amino-acid chain: KYYEPNTVQGRSVIVHLFEWRWKDVADECEQFLSPKGY.

The protein belongs to the glycosyl hydrolase 13 family. As to quaternary structure, monomer. Ca(2+) is required as a cofactor. It depends on chloride as a cofactor. As to expression, expressed by the venom gland.

It is found in the secreted. The enzyme catalyses Endohydrolysis of (1-&gt;4)-alpha-D-glucosidic linkages in polysaccharides containing three or more (1-&gt;4)-alpha-linked D-glucose units.. This Tityus serrulatus (Brazilian scorpion) protein is Alpha-amylase.